Consider the following 173-residue polypeptide: Shikimate kinase 1 (173 aa).

14 to 19 (GAGKST) is a binding site for ATP. Ser18 is a binding site for Mg(2+). Positions 36, 60, and 82 each coordinate substrate. Arg120 provides a ligand contact to ATP. Arg140 contacts substrate. An ATP-binding site is contributed by Gln157.

This sequence belongs to the shikimate kinase family. In terms of assembly, monomer. It depends on Mg(2+) as a cofactor.

The protein localises to the cytoplasm. It catalyses the reaction shikimate + ATP = 3-phosphoshikimate + ADP + H(+). It participates in metabolic intermediate biosynthesis; chorismate biosynthesis; chorismate from D-erythrose 4-phosphate and phosphoenolpyruvate: step 5/7. In terms of biological role, catalyzes the specific phosphorylation of the 3-hydroxyl group of shikimic acid using ATP as a cosubstrate. This chain is Shikimate kinase 1, found in Sodalis glossinidius (strain morsitans).